Here is a 36-residue protein sequence, read N- to C-terminus: U-metritoxin-Msn1a (36 aa).

The region spanning 4–36 (CKDKLPACGEYRGSFCKLEKVKSNCEKTCGVKC) is the ShKT domain. 3 cysteine pairs are disulfide-bonded: C4/C36, C11/C28, and C19/C32.

It belongs to the sea anemone type 1 potassium channel toxin family. Type 1b subfamily.

It is found in the secreted. The protein resides in the nematocyst. In terms of biological role, has hemolytic activity. Inhibits voltage-gated potassium channels (Kv1/KCNA). This chain is U-metritoxin-Msn1a, found in Metridium senile (Brown sea anemone).